Here is a 319-residue protein sequence, read N- to C-terminus: tRNA uridine(34) hydroxylase (319 aa).

A Rhodanese domain is found at 127-221 (KQEDTVIIDA…YGKDPEVQGE (95 aa)). The active-site Cysteine persulfide intermediate is the C181.

This sequence belongs to the TrhO family.

It catalyses the reaction uridine(34) in tRNA + AH2 + O2 = 5-hydroxyuridine(34) in tRNA + A + H2O. Catalyzes oxygen-dependent 5-hydroxyuridine (ho5U) modification at position 34 in tRNAs. The polypeptide is tRNA uridine(34) hydroxylase (Bacillus cereus (strain ATCC 10987 / NRS 248)).